Here is a 271-residue protein sequence, read N- to C-terminus: Sedoheptulose 1,7-bisphosphatase (271 aa).

R12 provides a ligand contact to substrate. H13 serves as the catalytic Tele-phosphohistidine intermediate. Residues Y24–T25, R69, E99–Y102, R181, and H244 each bind substrate. The active-site Proton donor/acceptor is the E99.

Belongs to the phosphoglycerate mutase family. SHB17 subfamily. As to quaternary structure, homodimer.

The protein resides in the cytoplasm. It is found in the nucleus. The catalysed reaction is D-sedoheptulose 1,7-bisphosphate + H2O = D-sedoheptulose 7-phosphate + phosphate. Sedoheptulose 1,7-bisphosphatase involved in riboneogenesis. Dephosphorylates sedoheptulose 1,7-bisphosphate (SBP), which is converted via the non-oxidative pentose phosphate pathway to ribose-5-phosphate. Has a fructose 1,6-bisphosphatase activity in vitro, but this is probably not biologically relevant, since deletion does not affect fructose 1,6-biphosphate (FBP) levels. This Saccharomyces cerevisiae (strain ATCC 204508 / S288c) (Baker's yeast) protein is Sedoheptulose 1,7-bisphosphatase (SHB17).